The following is a 593-amino-acid chain: Myc box-dependent-interacting protein 1 (593 aa).

An N-acetylalanine modification is found at alanine 2. The segment at 2-122 (AEMGSKGVTA…DYHQKLVDQA (121 aa)) is interaction with BIN2. Coiled-coil stretches lie at residues 15–42 (ASNV…TKDE) and 193–267 (HLVA…NDVL). The 248-residue stretch at 29-276 (VLQKLGKADE…LVGLEKQHGS (248 aa)) folds into the BAR domain. Disordered stretches follow at residues 280–354 (TVKA…KEVK) and 400–488 (PVTS…AASS). 3 positions are modified to phosphoserine: serine 296, serine 298, and serine 303. Phosphothreonine is present on residues threonine 307 and threonine 323. Serine 331 is modified (phosphoserine). Positions 378 to 421 (FEAPGPFSEQASLLDLDFDPLPPVTSPVKAPTPSGQSIPWDLWE) are clathrin-binding. One can recognise an SH3 domain in the interval 520–593 (GFMFKVQAQH…FPENFTERVP (74 aa)).

As to quaternary structure, heterodimer with AMPH. Binds SH3GLB1. Interacts (via SH3 domain) with DNM1. Interacts with SYNJ1. Interacts (via SH3 domain) with DNM2. Isoform IIA interacts with CLTC. Isoform IIB does not interact with CLTC. Isoform IIC1 does not interact with CLTC. Isoform IIC2 does not interact with CLTC. Interacts with AP2A2. Interacts with AP2B1. Interacts with MYC (via N-terminal transactivation domain); the interaction requires the integrity of the conserved MYC box regions 1 and 2. Interacts with BIN2. Interacts with SNX4. Interacts (via BAR domain) with BACE1. Binds (via BAR domain) F-actin. In terms of assembly, (Microbial infection) Interacts (SH3 domain) with HCV NS5A. Phosphorylated by protein kinase C. As to expression, ubiquitous. Highest expression in the brain and muscle. Expressed in oligodendrocytes. Isoform IIA is expressed only in the brain, where it is detected in the gray matter, but not in the white matter. Isoform BIN1 is widely expressed with highest expression in skeletal muscle.

It is found in the nucleus. The protein localises to the cytoplasm. Its subcellular location is the endosome. It localises to the cell membrane. The protein resides in the sarcolemma. It is found in the T-tubule. In terms of biological role, is a key player in the control of plasma membrane curvature, membrane shaping and membrane remodeling. Required in muscle cells for the formation of T-tubules, tubular invaginations of the plasma membrane that function in depolarization-contraction coupling. Is a negative regulator of endocytosis. Is also involved in the regulation of intracellular vesicles sorting, modulation of BACE1 trafficking and the control of amyloid-beta production. In neuronal circuits, endocytosis regulation may influence the internalization of PHF-tau aggregates. May be involved in the regulation of MYC activity and the control cell proliferation. Has actin bundling activity and stabilizes actin filaments against depolymerization in vitro. The sequence is that of Myc box-dependent-interacting protein 1 (BIN1) from Homo sapiens (Human).